The chain runs to 107 residues: MNTIKEQEIYKNIDLWESDELGCSKETARISNFSVEDLQKSIQLQSISLRIQKDVLEDLKYIAKSYGIGYQPLMKQILKRFVDAEKQLLLREEVEFKKEFNKKRIYG.

This is an uncharacterized protein from Pasteurella multocida (strain Pm70).